The following is a 178-amino-acid chain: ATP-dependent protease subunit HslV (178 aa).

Thr2 is a catalytic residue. Residues Gly157, Cys160, and Thr163 each contribute to the Na(+) site.

It belongs to the peptidase T1B family. HslV subfamily. In terms of assembly, a double ring-shaped homohexamer of HslV is capped on each side by a ring-shaped HslU homohexamer. The assembly of the HslU/HslV complex is dependent on binding of ATP.

Its subcellular location is the cytoplasm. It catalyses the reaction ATP-dependent cleavage of peptide bonds with broad specificity.. Allosterically activated by HslU binding. Its function is as follows. Protease subunit of a proteasome-like degradation complex believed to be a general protein degrading machinery. The sequence is that of ATP-dependent protease subunit HslV from Hamiltonella defensa subsp. Acyrthosiphon pisum (strain 5AT).